Consider the following 743-residue polypeptide: Cytosolic neutral trehalase (743 aa).

D95, D97, N99, Q101, and D106 together coordinate Ca(2+). Substrate-binding positions include R285, 292–293 (WD), N329, 338–340 (RSQ), E405, R454, and G457. Catalysis depends on proton donor/acceptor residues D459 and E664.

Belongs to the glycosyl hydrolase 37 family. Requires Ca(2+) as cofactor.

The protein resides in the cytoplasm. It carries out the reaction alpha,alpha-trehalose + H2O = alpha-D-glucose + beta-D-glucose. Its pathway is carbohydrate degradation. Hydrolyzes intracellular trehalose to glucose. The chain is Cytosolic neutral trehalase from Beauveria bassiana (strain ARSEF 2860) (White muscardine disease fungus).